The chain runs to 338 residues: Glyceraldehyde-3-phosphate dehydrogenase (338 aa).

Residues 12–13 (RI), D34, and R79 contribute to the NAD(+) site. Residues 150–152 (SCT), T181, 210–211 (TG), and R233 each bind D-glyceraldehyde 3-phosphate. Residue C151 is the Nucleophile of the active site. N315 provides a ligand contact to NAD(+).

This sequence belongs to the glyceraldehyde-3-phosphate dehydrogenase family. Homotetramer.

The protein localises to the cytoplasm. It catalyses the reaction D-glyceraldehyde 3-phosphate + phosphate + NAD(+) = (2R)-3-phospho-glyceroyl phosphate + NADH + H(+). It functions in the pathway carbohydrate degradation; glycolysis; pyruvate from D-glyceraldehyde 3-phosphate: step 1/5. The chain is Glyceraldehyde-3-phosphate dehydrogenase (GPD) from Sordaria macrospora.